The sequence spans 287 residues: Ethylene-inducing xylanase 3 (287 aa).

Residues 1 to 19 (MVCFSSLFVAASAIAVVFA) form the signal peptide. A GH11 domain is found at 31-219 (QSTPSSQGTH…SSGSARINVA (189 aa)). E115 functions as the Nucleophile in the catalytic mechanism. The active-site Proton donor is E206. Residues 252–287 (SCAARWGQCGGSGWNGATCCSAGTCQAQNQWYSQCL) enclose the CBM1 domain.

Belongs to the glycosyl hydrolase 11 (cellulase G) family.

It carries out the reaction Endohydrolysis of (1-&gt;4)-beta-D-xylosidic linkages in xylans.. It functions in the pathway glycan degradation; xylan degradation. Functionally, endo-1,4-beta-xylanase involved in the hydrolysis of xylan, a major structural heterogeneous polysaccharide found in plant biomass representing the second most abundant polysaccharide in the biosphere, after cellulose. Exhibits immunity-inducing activity and induces cell death in Nicotiana benthamiana. This chain is Ethylene-inducing xylanase 3, found in Verticillium longisporum (Verticillium dahliae var. longisporum).